Reading from the N-terminus, the 352-residue chain is 3-dehydroquinate synthase (352 aa).

NAD(+)-binding positions include 60 to 65 (DGEGAK), 118 to 119 (TT), lysine 131, lysine 140, and 158 to 161 (FLET). Residues glutamate 173, histidine 237, and histidine 253 each coordinate Zn(2+).

Belongs to the sugar phosphate cyclases superfamily. Dehydroquinate synthase family. Requires NAD(+) as cofactor. The cofactor is Co(2+). Zn(2+) serves as cofactor.

It is found in the cytoplasm. It catalyses the reaction 7-phospho-2-dehydro-3-deoxy-D-arabino-heptonate = 3-dehydroquinate + phosphate. Its pathway is metabolic intermediate biosynthesis; chorismate biosynthesis; chorismate from D-erythrose 4-phosphate and phosphoenolpyruvate: step 2/7. Its function is as follows. Catalyzes the conversion of 3-deoxy-D-arabino-heptulosonate 7-phosphate (DAHP) to dehydroquinate (DHQ). The chain is 3-dehydroquinate synthase from Sulfurisphaera tokodaii (strain DSM 16993 / JCM 10545 / NBRC 100140 / 7) (Sulfolobus tokodaii).